Here is a 762-residue protein sequence, read N- to C-terminus: 5-methyltetrahydropteroyltriglutamate--homocysteine methyltransferase (762 aa).

5-methyltetrahydropteroyltri-L-glutamate-binding positions include 17–20 and K111; that span reads REWK. L-homocysteine contacts are provided by residues 435–437 and E488; that span reads IGS. Residues 435–437 and E488 each bind L-methionine; that span reads IGS. Residues 519-520 and W565 each bind 5-methyltetrahydropteroyltri-L-glutamate; that span reads RC. D603 contributes to the L-homocysteine binding site. D603 is an L-methionine binding site. E609 provides a ligand contact to 5-methyltetrahydropteroyltri-L-glutamate. Positions 645, 647, and 669 each coordinate Zn(2+). The active-site Proton donor is H698. C730 provides a ligand contact to Zn(2+).

This sequence belongs to the vitamin-B12 independent methionine synthase family. Zn(2+) serves as cofactor.

It catalyses the reaction 5-methyltetrahydropteroyltri-L-glutamate + L-homocysteine = tetrahydropteroyltri-L-glutamate + L-methionine. It participates in amino-acid biosynthesis; L-methionine biosynthesis via de novo pathway; L-methionine from L-homocysteine (MetE route): step 1/1. In terms of biological role, catalyzes the transfer of a methyl group from 5-methyltetrahydrofolate to homocysteine resulting in methionine formation. The polypeptide is 5-methyltetrahydropteroyltriglutamate--homocysteine methyltransferase (Bacillus cereus (strain ATCC 14579 / DSM 31 / CCUG 7414 / JCM 2152 / NBRC 15305 / NCIMB 9373 / NCTC 2599 / NRRL B-3711)).